We begin with the raw amino-acid sequence, 348 residues long: Phenylalanine--tRNA ligase alpha subunit (348 aa).

Glutamate 259 is a binding site for Mg(2+).

This sequence belongs to the class-II aminoacyl-tRNA synthetase family. Phe-tRNA synthetase alpha subunit type 1 subfamily. In terms of assembly, tetramer of two alpha and two beta subunits. Requires Mg(2+) as cofactor.

It localises to the cytoplasm. It catalyses the reaction tRNA(Phe) + L-phenylalanine + ATP = L-phenylalanyl-tRNA(Phe) + AMP + diphosphate + H(+). The polypeptide is Phenylalanine--tRNA ligase alpha subunit (Lacticaseibacillus paracasei (strain ATCC 334 / BCRC 17002 / CCUG 31169 / CIP 107868 / KCTC 3260 / NRRL B-441) (Lactobacillus paracasei)).